The primary structure comprises 206 residues: Small ribosomal subunit protein uS4 (206 aa).

Positions 96-156 constitute an S4 RNA-binding domain; sequence TRLDNVVYRM…EKSRTQARIK (61 aa).

It belongs to the universal ribosomal protein uS4 family. As to quaternary structure, part of the 30S ribosomal subunit. Contacts protein S5. The interaction surface between S4 and S5 is involved in control of translational fidelity.

One of the primary rRNA binding proteins, it binds directly to 16S rRNA where it nucleates assembly of the body of the 30S subunit. Functionally, with S5 and S12 plays an important role in translational accuracy. The polypeptide is Small ribosomal subunit protein uS4 (Shewanella putrefaciens (strain CN-32 / ATCC BAA-453)).